The chain runs to 81 residues: Defensin-like protein 313 (81 aa).

Residues 1 to 32 form the signal peptide; sequence MESKRSSSSPLLILITTIMIIFIISGPKSVDA. Intrachain disulfides connect Cys-34-Cys-63, Cys-45-Cys-74, and Cys-49-Cys-76.

The protein belongs to the DEFL family.

The protein localises to the secreted. This is Defensin-like protein 313 from Arabidopsis thaliana (Mouse-ear cress).